Reading from the N-terminus, the 279-residue chain is Dihydropteroate synthase type-1 (279 aa).

The Pterin-binding domain maps to 1–258 (MVTVFGILNL…APGDLRSAIT (258 aa)). A Mg(2+)-binding site is contributed by asparagine 9. (7,8-dihydropterin-6-yl)methyl diphosphate contacts are provided by residues aspartate 82, asparagine 101, aspartate 173, lysine 212, and 246-248 (RTH).

The protein belongs to the DHPS family. As to quaternary structure, homodimer or homotrimer. It depends on Mg(2+) as a cofactor.

It carries out the reaction (7,8-dihydropterin-6-yl)methyl diphosphate + 4-aminobenzoate = 7,8-dihydropteroate + diphosphate. It participates in cofactor biosynthesis; tetrahydrofolate biosynthesis; 7,8-dihydrofolate from 2-amino-4-hydroxy-6-hydroxymethyl-7,8-dihydropteridine diphosphate and 4-aminobenzoate: step 1/2. In terms of biological role, catalyzes the condensation of para-aminobenzoate (pABA) with 6-hydroxymethyl-7,8-dihydropterin diphosphate (DHPt-PP) to form 7,8-dihydropteroate (H2Pte), the immediate precursor of folate derivatives. The protein is Dihydropteroate synthase type-1 (sulI) of Corynebacterium glutamicum (Brevibacterium saccharolyticum).